Consider the following 208-residue polypeptide: Dephospho-CoA kinase (208 aa).

The 201-residue stretch at 8 to 208 (LVGVTGGIGS…VYQSLLTVVE (201 aa)) folds into the DPCK domain. 16-21 (GSGKST) contacts ATP.

The protein belongs to the CoaE family.

It is found in the cytoplasm. It carries out the reaction 3'-dephospho-CoA + ATP = ADP + CoA + H(+). The protein operates within cofactor biosynthesis; coenzyme A biosynthesis; CoA from (R)-pantothenate: step 5/5. Catalyzes the phosphorylation of the 3'-hydroxyl group of dephosphocoenzyme A to form coenzyme A. The polypeptide is Dephospho-CoA kinase (Chlorobaculum tepidum (strain ATCC 49652 / DSM 12025 / NBRC 103806 / TLS) (Chlorobium tepidum)).